The primary structure comprises 401 residues: Imidazolonepropionase (401 aa).

Residues His-66 and His-68 each coordinate Fe(3+). Residues His-66 and His-68 each coordinate Zn(2+). 4-imidazolone-5-propanoate is bound by residues Arg-75, Tyr-138, and His-171. Tyr-138 lines the N-formimidoyl-L-glutamate pocket. His-236 serves as a coordination point for Fe(3+). His-236 lines the Zn(2+) pocket. Position 239 (Gln-239) interacts with 4-imidazolone-5-propanoate. Position 311 (Asp-311) interacts with Fe(3+). Asp-311 is a Zn(2+) binding site. N-formimidoyl-L-glutamate is bound by residues Asn-313 and Gly-315. Residue Thr-316 participates in 4-imidazolone-5-propanoate binding.

Belongs to the metallo-dependent hydrolases superfamily. HutI family. Zn(2+) is required as a cofactor. Fe(3+) serves as cofactor.

The protein resides in the cytoplasm. It carries out the reaction 4-imidazolone-5-propanoate + H2O = N-formimidoyl-L-glutamate. The protein operates within amino-acid degradation; L-histidine degradation into L-glutamate; N-formimidoyl-L-glutamate from L-histidine: step 3/3. In terms of biological role, catalyzes the hydrolytic cleavage of the carbon-nitrogen bond in imidazolone-5-propanoate to yield N-formimidoyl-L-glutamate. It is the third step in the universal histidine degradation pathway. This chain is Imidazolonepropionase, found in Acinetobacter baumannii (strain ATCC 17978 / DSM 105126 / CIP 53.77 / LMG 1025 / NCDC KC755 / 5377).